The chain runs to 58 residues: Mitochondrial import receptor subunit TOM7 homolog (58 aa).

Residues 1–16 (MKLSPATKSFIGKTVD) are Cytoplasmic-facing. The chain crosses the membrane as a helical span at residues 17–35 (ISTFAIQWGFVPFVVYLGF). Topologically, residues 36 to 58 (KKGAEPMPNGQILPLSAMSLLWG) are mitochondrial intermembrane.

The protein belongs to the Tom7 family. As to quaternary structure, forms part of the preprotein translocase complex of the outer mitochondrial membrane (TOM complex).

It is found in the mitochondrion outer membrane. In Caenorhabditis elegans, this protein is Mitochondrial import receptor subunit TOM7 homolog (tomm-7).